We begin with the raw amino-acid sequence, 407 residues long: Aurora kinase A-A (407 aa).

Over residues 1–10 (MERAVKENHK) the composition is skewed to basic and acidic residues. The segment at 1 to 130 (MERAVKENHK…KTSAVPKEEG (130 aa)) is disordered. Composition is skewed to polar residues over residues 67 to 77 (ILSSQKPTTQI) and 84 to 110 (QGHQ…STPN). Positions 140–390 (FEIGRPLGKG…LKGVLEHPWI (251 aa)) constitute a Protein kinase domain. ATP-binding positions include K150, K169, and 217–220 (LDYA). D263 (proton acceptor) is an active-site residue. An ATP-binding site is contributed by D281. Residues 287–300 (HAPSSRRTTLCGTL) form an activation segment region.

The protein belongs to the protein kinase superfamily. Ser/Thr protein kinase family. Aurora subfamily. As to quaternary structure, interacts with kif2c and kif11. Post-translationally, phosphorylated. Autophosphorylated on a serine residue. Highly expressed in ovary and testis.

The protein localises to the cytoplasm. It is found in the cytoskeleton. The protein resides in the spindle. It localises to the microtubule organizing center. Its subcellular location is the centrosome. It carries out the reaction L-seryl-[protein] + ATP = O-phospho-L-seryl-[protein] + ADP + H(+). The catalysed reaction is L-threonyl-[protein] + ATP = O-phospho-L-threonyl-[protein] + ADP + H(+). In terms of biological role, mitotic serine/threonine kinases that contributes to the regulation of cell cycle progression. Associates with the centrosome and the spindle microtubules during mitosis and plays a critical role in various mitotic events including the establishment of mitotic spindle, centrosome duplication, centrosome separation as well as maturation, chromosomal alignment, spindle assembly checkpoint, and cytokinesis. Phosphorylates numerous target proteins. Important for microtubule formation and/or stabilization. The protein is Aurora kinase A-A (aurka-a) of Xenopus laevis (African clawed frog).